A 273-amino-acid chain; its full sequence is Putative pyruvate, phosphate dikinase regulatory protein 2 (273 aa).

151-158 (GVSRTSKT) is a binding site for ADP.

Belongs to the pyruvate, phosphate/water dikinase regulatory protein family. PDRP subfamily.

It catalyses the reaction N(tele)-phospho-L-histidyl/L-threonyl-[pyruvate, phosphate dikinase] + ADP = N(tele)-phospho-L-histidyl/O-phospho-L-threonyl-[pyruvate, phosphate dikinase] + AMP + H(+). The enzyme catalyses N(tele)-phospho-L-histidyl/O-phospho-L-threonyl-[pyruvate, phosphate dikinase] + phosphate + H(+) = N(tele)-phospho-L-histidyl/L-threonyl-[pyruvate, phosphate dikinase] + diphosphate. Bifunctional serine/threonine kinase and phosphorylase involved in the regulation of the pyruvate, phosphate dikinase (PPDK) by catalyzing its phosphorylation/dephosphorylation. The chain is Putative pyruvate, phosphate dikinase regulatory protein 2 from Syntrophomonas wolfei subsp. wolfei (strain DSM 2245B / Goettingen).